The chain runs to 290 residues: UBX domain-containing protein 1-B (290 aa).

In terms of domain architecture, UBA spans 1 to 42 (MADCSALESLIEMGFSPSRAEKALSATGNQGIEPAMDWLVEH). The interval 49–210 (KEPSVVIPED…VQEPPTKKEY (162 aa)) is disordered. Composition is skewed to basic and acidic residues over residues 80 to 117 (PLTE…EQEK) and 132 to 172 (RMQE…DRAR). Positions 81 to 171 (LTEEEKEKQT…KIARDKADRA (91 aa)) form a coiled coil. Positions 185 to 201 (PAETSVPATAPSPSSPV) are enriched in low complexity. The UBX domain occupies 208–287 (KEYDQCRIQV…GLVPTAVLIV (80 aa)).

It localises to the cytoplasm. Component of a complex required to couple deglycosylation and proteasome-mediated degradation of misfolded proteins in the endoplasmic reticulum that are retrotranslocated in the cytosol. Involved in ubiquitin-proteasome systems. The chain is UBX domain-containing protein 1-B (ubxn1-b) from Xenopus laevis (African clawed frog).